Reading from the N-terminus, the 497-residue chain is Serine hydroxymethyltransferase (497 aa).

(6S)-5,6,7,8-tetrahydrofolate-binding positions include L176 and 180–182 (GHL). K289 carries the post-translational modification N6-(pyridoxal phosphate)lysine.

It belongs to the SHMT family. In terms of assembly, homodimer. Pyridoxal 5'-phosphate is required as a cofactor.

It is found in the cytoplasm. The enzyme catalyses (6R)-5,10-methylene-5,6,7,8-tetrahydrofolate + glycine + H2O = (6S)-5,6,7,8-tetrahydrofolate + L-serine. It participates in one-carbon metabolism; tetrahydrofolate interconversion. It functions in the pathway amino-acid biosynthesis; glycine biosynthesis; glycine from L-serine: step 1/1. Its function is as follows. Catalyzes the reversible interconversion of serine and glycine with tetrahydrofolate (THF) serving as the one-carbon carrier. This reaction serves as the major source of one-carbon groups required for the biosynthesis of purines, thymidylate, methionine, and other important biomolecules. Also exhibits THF-independent aldolase activity toward beta-hydroxyamino acids, producing glycine and aldehydes, via a retro-aldol mechanism. In Chlamydia caviae (strain ATCC VR-813 / DSM 19441 / 03DC25 / GPIC) (Chlamydophila caviae), this protein is Serine hydroxymethyltransferase.